Here is a 550-residue protein sequence, read N- to C-terminus: CTP synthase (550 aa).

The amidoligase domain stretch occupies residues 1 to 271 (MTRYIFITGG…DAEVLDVFGM (271 aa)). S13 lines the CTP pocket. S13 serves as a coordination point for UTP. 14–19 (SLGKGL) is an ATP binding site. Y54 is a binding site for L-glutamine. An ATP-binding site is contributed by D71. Residues D71 and E145 each coordinate Mg(2+). Residues 152–154 (DIE), 192–197 (KTKPTQ), and K228 contribute to the CTP site. UTP-binding positions include 192–197 (KTKPTQ) and K228. The Glutamine amidotransferase type-1 domain occupies 297–549 (TIAVVGKYTV…IAAAKEQGRL (253 aa)). G361 provides a ligand contact to L-glutamine. Residue C388 is the Nucleophile; for glutamine hydrolysis of the active site. Residues 389-392 (FGMQ), E412, and R477 each bind L-glutamine. Catalysis depends on residues H522 and E524.

Belongs to the CTP synthase family. Homotetramer.

It carries out the reaction UTP + L-glutamine + ATP + H2O = CTP + L-glutamate + ADP + phosphate + 2 H(+). It catalyses the reaction L-glutamine + H2O = L-glutamate + NH4(+). The catalysed reaction is UTP + NH4(+) + ATP = CTP + ADP + phosphate + 2 H(+). It functions in the pathway pyrimidine metabolism; CTP biosynthesis via de novo pathway; CTP from UDP: step 2/2. Allosterically activated by GTP, when glutamine is the substrate; GTP has no effect on the reaction when ammonia is the substrate. The allosteric effector GTP functions by stabilizing the protein conformation that binds the tetrahedral intermediate(s) formed during glutamine hydrolysis. Inhibited by the product CTP, via allosteric rather than competitive inhibition. Functionally, catalyzes the ATP-dependent amination of UTP to CTP with either L-glutamine or ammonia as the source of nitrogen. Regulates intracellular CTP levels through interactions with the four ribonucleotide triphosphates. The sequence is that of CTP synthase from Caulobacter sp. (strain K31).